A 367-amino-acid polypeptide reads, in one-letter code: Prenyltransferase idtC (367 aa).

The signal sequence occupies residues 1 to 22 (MTTLAWFAGRSMVLDLAALTSA). A compositionally biased stretch (low complexity) spans 32–42 (TSTPTSTPTST). Residues 32–84 (TSTPTSTPTSTDKAGTPPGSTIHHYGYPQGSVTKPNNSKTEKENGSPKDSKGN) are disordered. Asparagine 67 carries an N-linked (GlcNAc...) asparagine glycan. The span at 70-82 (KTEKENGSPKDSK) shows a compositional bias: basic and acidic residues. Substrate is bound at residue histidine 132. Mg(2+) is bound by residues aspartate 139 and aspartate 143. Residue arginine 148 participates in substrate binding. The N-linked (GlcNAc...) asparagine glycan is linked to asparagine 150. Positions 233, 234, 264, 271, and 281 each coordinate substrate.

Belongs to the FPP/GGPP synthase family. Requires Mg(2+) as cofactor.

Its pathway is secondary metabolite biosynthesis. Its function is as follows. Prenyltransferase; part of the gene cluster that mediates the biosynthesis of paspalitrems, indole-diterpene (IDT) mycotoxins that are potent tremorgens in mammals. The geranylgeranyl diphosphate (GGPP) synthase idtG is proposed to catalyze the first step in IDT biosynthesis via catalysis of a series of iterative condensations of isopentenyl diphosphate (IPP) with dimethylallyl diphosphate (DMAPP), geranyl diphosphate (GPP), and farnesyl diphosphate (FPP), to form GGPP. Condensation of indole-3-glycerol phosphate with GGPP by the prenyltransferase idtC then forms 3-geranylgeranylindole (3-GGI). Epoxidation of the two terminal alkenes of the geranylgeranyl moiety by the FAD-dependent monooxygenase idtM, and cyclization by the terpene cyclase idtB then leads to the production of paspaline. The cytochrome P450 monooxygenase idtP then catalyzes oxidative elimination of the pendant methyl group at C-12 of paspaline and generates the C-10 ketone to yield 13-desoxypaxilline. The cytochrome P450 monooxygenase idtQ may catalyze the C-13 oxidation of 13-desoxypaxilline to afford paxilline. Considering that both paspalicine and paxilline were detected in C.paspali, idtQ also catalyzes the formation of paspalinine from 13-desoxypaxilline via paspalicine as an intermediate. Finally, the alpha-prenyltransferase idtF prenylates paspalinine at the C-20 or the C-21 positions to yield paspalitrems A and C, respectively. The hydroxylation of paspalitrem A at C-32 by a still unknown oxidase affords paspalitrem B. This chain is Prenyltransferase idtC, found in Claviceps paspali (Rye ergot fungus).